The chain runs to 519 residues: Ribonuclease Y (519 aa).

The helical transmembrane segment at 3–23 (LIEIVLLLVGMAVGAATGFIL) threads the bilayer. Residues 209–272 (TVTAVSLPSE…QIAKMALERL (64 aa)) enclose the KH domain. Positions 335–428 (VLQHSMEVAS…VQAADSLSGA (94 aa)) constitute an HD domain.

This sequence belongs to the RNase Y family.

It is found in the cell membrane. Endoribonuclease that initiates mRNA decay. The polypeptide is Ribonuclease Y (Oleidesulfovibrio alaskensis (strain ATCC BAA-1058 / DSM 17464 / G20) (Desulfovibrio alaskensis)).